Reading from the N-terminus, the 265-residue chain is Probable FAD synthase (265 aa).

Belongs to the PAPS reductase family. FAD1 subfamily.

It catalyses the reaction FMN + ATP + H(+) = FAD + diphosphate. It participates in cofactor biosynthesis; FAD biosynthesis; FAD from FMN: step 1/1. In terms of biological role, adenylates FMN to FAD. The chain is Probable FAD synthase from Schizosaccharomyces pombe (strain 972 / ATCC 24843) (Fission yeast).